The sequence spans 225 residues: Cell division protein SepF (225 aa).

Residues 21–134 (DEYLDEPEPT…GPLFDEGGPL (114 aa)) are disordered. Composition is skewed to basic and acidic residues over residues 28-54 (EPTRRPARPARDSGRDPYHDRDDRDFA), 77-86 (RYESPRHSSR), and 115-127 (TRSDRVESRRGPL).

It belongs to the SepF family. Homodimer. Interacts with FtsZ.

The protein resides in the cytoplasm. Its function is as follows. Cell division protein that is part of the divisome complex and is recruited early to the Z-ring. Probably stimulates Z-ring formation, perhaps through the cross-linking of FtsZ protofilaments. Its function overlaps with FtsA. The polypeptide is Cell division protein SepF (Rhodococcus opacus (strain B4)).